The following is a 272-amino-acid chain: Shikimate dehydrogenase (NADP(+)) (272 aa).

Shikimate-binding positions include 14-16 and T61; that span reads SKS. K65 acts as the Proton acceptor in catalysis. E77 contributes to the NADP(+) binding site. Shikimate is bound by residues N86 and D102. NADP(+) is bound by residues 126–130, 149–154, and M213; these read GAGGA and NRTVSR. Shikimate is bound at residue Y215. NADP(+) is bound at residue G237.

This sequence belongs to the shikimate dehydrogenase family. Homodimer.

The catalysed reaction is shikimate + NADP(+) = 3-dehydroshikimate + NADPH + H(+). It functions in the pathway metabolic intermediate biosynthesis; chorismate biosynthesis; chorismate from D-erythrose 4-phosphate and phosphoenolpyruvate: step 4/7. In terms of biological role, involved in the biosynthesis of the chorismate, which leads to the biosynthesis of aromatic amino acids. Catalyzes the reversible NADPH linked reduction of 3-dehydroshikimate (DHSA) to yield shikimate (SA). This chain is Shikimate dehydrogenase (NADP(+)), found in Shigella flexneri serotype 5b (strain 8401).